Reading from the N-terminus, the 427-residue chain is Probable WRKY transcription factor 35 (427 aa).

Disordered stretches follow at residues 1–45 (MDNF…DLHV) and 266–336 (YTSE…HPPF). Over residues 23–40 (SPGPPEGPSPSSMSPPPT) the composition is skewed to pro residues. Residues 209-275 (SGEVVPSDLW…YTSEHNHPWP (67 aa)) constitute a DNA-binding region (WRKY). Positions 284–310 (STRSSSSSSLNPSSKSSTAAATTSPSS) are enriched in low complexity. Over residues 311 to 333 (RVFQNNSSKDEPNNSNLPSSSTH) the composition is skewed to polar residues.

Belongs to the WRKY group II-e family.

The protein localises to the nucleus. Its function is as follows. Transcription factor. Interacts specifically with the W box (5'-(T)TGAC[CT]-3'), a frequently occurring elicitor-responsive cis-acting element. This is Probable WRKY transcription factor 35 (WRKY35) from Arabidopsis thaliana (Mouse-ear cress).